The chain runs to 240 residues: Thiopurine S-methyltransferase (240 aa).

Position 24-35 (24-35 (WKEKWVTRHISF)) interacts with S-adenosyl-L-methionine. At Ser34 the chain carries Phosphoserine. Phe35 contributes to the substrate binding site. Lys53 carries the post-translational modification N6-acetyllysine. S-adenosyl-L-methionine contacts are provided by residues Leu64, Glu85, 129-130 (SI), and Arg147.

It belongs to the class I-like SAM-binding methyltransferase superfamily. TPMT family. Monomer.

The protein resides in the cytoplasm. The enzyme catalyses S-adenosyl-L-methionine + a thiopurine = S-adenosyl-L-homocysteine + a thiopurine S-methylether.. The catalysed reaction is mercaptopurine + S-adenosyl-L-methionine = 6-methylthiopurine + S-adenosyl-L-homocysteine + H(+). Catalyzes the S-methylation of thiopurine drugs such as 6-mercaptopurine (also called mercaptopurine, 6-MP or its brand name Purinethol) using S-adenosyl-L-methionine as the methyl donor. TPMT activity modulates the cytotoxic effects of thiopurine prodrugs. A natural substrate for this enzyme has yet to be identified. In Mus musculus (Mouse), this protein is Thiopurine S-methyltransferase (Tpmt).